A 374-amino-acid polypeptide reads, in one-letter code: C-C chemokine receptor type 2 (374 aa).

Residues Met1–Ala42 are Extracellular-facing. Asn14 carries N-linked (GlcNAc...) asparagine glycosylation. Position 26 is a sulfotyrosine (Tyr26). Residues Gln43 to Cys70 form a helical membrane-spanning segment. Topologically, residues Lys71–Tyr80 are cytoplasmic. A helical transmembrane segment spans residues Leu81–His100. The Extracellular portion of the chain corresponds to Ser101–Lys114. Cys113 and Cys190 are oxidised to a cystine. The helical transmembrane segment at Leu115–Ile136 threads the bilayer. Residues Asp137–Thr153 lie on the Cytoplasmic side of the membrane. Tyr139 is modified (phosphotyrosine; by JAK2). A helical membrane pass occupies residues Val154–Phe178. The Extracellular portion of the chain corresponds to Thr179–Arg206. Residues Asn207 to Leu226 form a helical membrane-spanning segment. At Lys227–Arg243 the chain is on the cytoplasmic side. The helical transmembrane segment at Val244 to Phe268 threads the bilayer. The Extracellular segment spans residues Gln269 to Gln285. Residues Ala286–Gly309 form a helical membrane-spanning segment. The Cytoplasmic segment spans residues Glu310–Ala374. Positions Gln348 to Ala374 are disordered.

It belongs to the G-protein coupled receptor 1 family. In terms of assembly, interacts with ARRB1. Interacts (via extracellular N-terminal region) with beta-defensin DEFB106A/DEFB106B; this interaction may preferentially require specific tyrosine sulfation on CCR2. Interacts with NUP85; the interaction is required for CCR2 clusters formation on the cell membrane and CCR2 signaling. (Microbial infection) Binds to HIV-1 Tat. N-glycosylated. Post-translationally, sulfation increases the affinity for both monomeric and dimeric CCL2 with stronger binding to the monomeric form. Binding of sulfated CCR2 to CCL2 promotes conversion of CCL2 from dimer to monomer. In terms of tissue distribution, expressed by monocytes and IL2-activated NK cells. Abundantly expressed on CD14+/CD16- monocytes and weakly on CD14+/CD16+ monocytes, type 2 dendritic cells (DCs) and plasmacytoid DCs (at protein level).

It localises to the cell membrane. Its function is as follows. Key functional receptor for CCL2 but can also bind CCL7, and CCL12. Also transduces signaling mediated by CCL13. Its binding with CCL2 on monocytes and macrophages mediates chemotaxis and migration induction through the activation of the PI3K cascade, the small G protein Rac and lamellipodium protrusion. Also acts as a receptor for the beta-defensin DEFB106A/DEFB106B. Regulates the expression of T-cell inflammatory cytokines and T-cell differentiation, promoting the differentiation of T-cells into T-helper 17 cells (Th17) during inflammation. Facilitates the export of mature thymocytes by enhancing directional movement of thymocytes to sphingosine-1-phosphate stimulation and up-regulation of S1P1R expression; signals through the JAK-STAT pathway to regulate FOXO1 activity leading to an increased expression of S1P1R. Plays an important role in mediating peripheral nerve injury-induced neuropathic pain. Increases NMDA-mediated synaptic transmission in both dopamine D1 and D2 receptor-containing neurons, which may be caused by MAPK/ERK-dependent phosphorylation of GRIN2B/NMDAR2B. Mediates the recruitment of macrophages and monocytes to the injury site following brain injury. Functionally, (Microbial infection) Alternative coreceptor with CD4 for HIV-1 infection. This is C-C chemokine receptor type 2 (CCR2) from Homo sapiens (Human).